Reading from the N-terminus, the 540-residue chain is Zona pellucida sperm-binding protein 4 (540 aa).

The first 24 residues, 1–24 (MAPGSTMWLLGYIFLCFPVSFALI), serve as a signal peptide directing secretion. Residues 25–515 (KQPKPETPTD…SGVPVHPGAL (491 aa)) are Extracellular-facing. N-linked (GlcNAc...) asparagine glycosylation is found at asparagine 76 and asparagine 97. Residues 145 to 187 (GLCDSVPVQDRLPCATAPISQEDCEELGCCHSSEEVNACYYGN) form the P-type domain. Residues 192-470 (HCTQEGHFSI…VTCPIDSRRR (279 aa)) enclose the ZP domain. Residues asparagine 206 and asparagine 223 are each glycosylated (N-linked (GlcNAc...) asparagine). An O-linked (GalNAc...) serine glycan is attached at serine 296. O-linked (GalNAc...) threonine glycosylation occurs at threonine 306. Cysteine 371 and cysteine 446 are joined by a disulfide. The propeptide at 467-540 (SRRRNSDINF…VSYVAIRTRR (74 aa)) is removed in mature form. N-linked (GlcNAc...) asparagine glycans are attached at residues asparagine 478 and asparagine 482. The helical transmembrane segment at 516–536 (WVAGLSGIFIIGALLVSYVAI) threads the bilayer. Residues 537–540 (RTRR) are Cytoplasmic-facing.

Belongs to the ZP domain family. ZPB subfamily. In terms of processing, proteolytically cleaved before the transmembrane segment to yield the secreted ectodomain incorporated in the zona pellucida. Expressed in oocytes (at protein level).

The protein resides in the zona pellucida. It localises to the cell membrane. Functionally, component of the zona pellucida, an extracellular matrix surrounding oocytes which mediates sperm binding, induction of the acrosome reaction and prevents post-fertilization polyspermy. The zona pellucida is composed of 3 to 4 glycoproteins, ZP1, ZP2, ZP3, and ZP4. ZP4 may act as a sperm receptor. The protein is Zona pellucida sperm-binding protein 4 (ZP4) of Oryctolagus cuniculus (Rabbit).